The following is a 129-amino-acid chain: DNA-directed RNA polymerase subunit omega (129 aa).

Residues 76–101 (EVDEPEPDPVTLAASAADGEDDDQPE) are disordered.

Belongs to the RNA polymerase subunit omega family. In terms of assembly, the RNAP catalytic core consists of 2 alpha, 1 beta, 1 beta' and 1 omega subunit. When a sigma factor is associated with the core the holoenzyme is formed, which can initiate transcription.

It catalyses the reaction RNA(n) + a ribonucleoside 5'-triphosphate = RNA(n+1) + diphosphate. Its function is as follows. Promotes RNA polymerase assembly. Latches the N- and C-terminal regions of the beta' subunit thereby facilitating its interaction with the beta and alpha subunits. This Agrobacterium fabrum (strain C58 / ATCC 33970) (Agrobacterium tumefaciens (strain C58)) protein is DNA-directed RNA polymerase subunit omega.